A 485-amino-acid polypeptide reads, in one-letter code: Probable aspartic-type endopeptidase opsB (485 aa).

Residues methionine 1–cysteine 20 form the signal peptide. Residues tyrosine 69–alanine 397 enclose the Peptidase A1 domain. Residue asparagine 72 is glycosylated (N-linked (GlcNAc...) asparagine). Aspartate 87 is a catalytic residue. N-linked (GlcNAc...) asparagine glycosylation is found at asparagine 99, asparagine 107, asparagine 111, and asparagine 132. The active site involves aspartate 285. N-linked (GlcNAc...) asparagine glycosylation is found at asparagine 328, asparagine 337, and asparagine 402. Residue serine 461 is the site of GPI-anchor amidated serine attachment. A propeptide spans alanine 462–leucine 485 (removed in mature form).

It belongs to the peptidase A1 family.

It is found in the cell membrane. In terms of biological role, probable GPI-anchored aspartic-type endopeptidase which contributes to virulence. In Aspergillus fumigatus (strain ATCC MYA-4609 / CBS 101355 / FGSC A1100 / Af293) (Neosartorya fumigata), this protein is Probable aspartic-type endopeptidase opsB (opsB).